A 302-amino-acid polypeptide reads, in one-letter code: Protoheme IX farnesyltransferase 2 (302 aa).

The next 9 membrane-spanning stretches (helical) occupy residues 14–34, 36–56, 85–105, 108–128, 133–153, 163–183, 209–229, 230–250, and 264–284; these read IIFG…QGSV, WWLL…GCAI, AALA…WFCT, LATG…SLYM, VYGT…GYCA, AILL…IAIF, IVLY…GGYA, GYGY…MALS, and QVFF…AVDG.

It belongs to the UbiA prenyltransferase family. Protoheme IX farnesyltransferase subfamily.

The protein localises to the cell inner membrane. The enzyme catalyses heme b + (2E,6E)-farnesyl diphosphate + H2O = Fe(II)-heme o + diphosphate. It participates in porphyrin-containing compound metabolism; heme O biosynthesis; heme O from protoheme: step 1/1. Functionally, converts heme B (protoheme IX) to heme O by substitution of the vinyl group on carbon 2 of heme B porphyrin ring with a hydroxyethyl farnesyl side group. The chain is Protoheme IX farnesyltransferase 2 from Chromobacterium violaceum (strain ATCC 12472 / DSM 30191 / JCM 1249 / CCUG 213 / NBRC 12614 / NCIMB 9131 / NCTC 9757 / MK).